Reading from the N-terminus, the 441-residue chain is C4-dicarboxylate transport protein (441 aa).

Residues 1–30 (MIIEHSAEVRGKTPLYRHLYVQVLAAIAAG) lie on the Cytoplasmic side of the membrane. The chain crosses the membrane as a helical span at residues 31 to 49 (ILLGHFYPDIGTELKPLGD). The Periplasmic portion of the chain corresponds to 50-68 (AFIRLVKMIIAPVIFLTVA). Residues 69-87 (TGIAGMTDLAKVGRVAGKA) traverse the membrane as a helical segment. Residues 88-99 (MIYFLAFSTLAL) lie on the Cytoplasmic side of the membrane. A helical transmembrane segment spans residues 100 to 118 (VVGLVVANVVQPGAGMHID). Residues 119 to 149 (PASLDAKAVATYAEKAHEQSITGFLMNIIPT) lie on the Periplasmic side of the membrane. The helical transmembrane segment at 150 to 168 (TLVGAFAEGDILQVLFISV) threads the bilayer. Residues 169–171 (LFG) are Cytoplasmic-facing. The helical transmembrane segment at 172–190 (ISLAIVGKKAEPVVDFLQA) threads the bilayer. Residues 191–209 (LTLPIFRLVAILMKAAPIG) lie on the Periplasmic side of the membrane. The helical transmembrane segment at 210-228 (AFGAMAFTIGKYGIASIAN) threads the bilayer. The Cytoplasmic segment spans residues 229–241 (LAMLIGTFYLTSF). The chain crosses the membrane as a helical span at residues 242-260 (LFVFIVLGAVARYNGFSIL). The Periplasmic segment spans residues 261 to 281 (SLIRYIKEELLLVLGTSSSEA). Residues 282 to 300 (ALPGLMNKMEKAGCKRSVV) form a helical membrane-spanning segment. At 301–320 (GLVIPTGYSFNLDGTNIYMT) the chain is on the cytoplasmic side. Residues 321 to 339 (LAALFIAQATDTPLSYGDQ) form a helical membrane-spanning segment. Residues 340-350 (ILLLLVAMLSS) are Periplasmic-facing. The chain crosses the membrane as a helical span at residues 351–369 (KGAAGITGAGFITLAATLS). Topologically, residues 370-378 (VVPSVPVAG) are cytoplasmic. Residues 379 to 398 (MALILGIDRFMSECRALTNF) traverse the membrane as a helical segment. Over 399–405 (VGNAVAT) the chain is Periplasmic. The helical transmembrane segment at 406 to 424 (IVVAKWEGELDQAQLSAAL) threads the bilayer. Residues 425 to 441 (GGEASVEAIPAVVQPAE) lie on the Cytoplasmic side of the membrane.

Belongs to the dicarboxylate/amino acid:cation symporter (DAACS) (TC 2.A.23) family.

The protein localises to the cell inner membrane. In terms of biological role, responsible for the transport of dicarboxylates such as succinate, fumarate, and malate from the periplasm across the inner membrane. This transport system plays an important role in the energy supply of rhizobium-legume symbionts. In Rhizobium meliloti (strain 1021) (Ensifer meliloti), this protein is C4-dicarboxylate transport protein (dctA).